Consider the following 256-residue polypeptide: Small ribosomal subunit protein uS2 (256 aa).

Belongs to the universal ribosomal protein uS2 family.

This is Small ribosomal subunit protein uS2 from Methylococcus capsulatus (strain ATCC 33009 / NCIMB 11132 / Bath).